The following is a 380-amino-acid chain: Histidinol-phosphate aminotransferase (380 aa).

The residue at position 235 (lysine 235) is an N6-(pyridoxal phosphate)lysine.

Belongs to the class-II pyridoxal-phosphate-dependent aminotransferase family. Histidinol-phosphate aminotransferase subfamily. Homodimer. Pyridoxal 5'-phosphate is required as a cofactor.

The catalysed reaction is L-histidinol phosphate + 2-oxoglutarate = 3-(imidazol-4-yl)-2-oxopropyl phosphate + L-glutamate. It functions in the pathway amino-acid biosynthesis; L-histidine biosynthesis; L-histidine from 5-phospho-alpha-D-ribose 1-diphosphate: step 7/9. The sequence is that of Histidinol-phosphate aminotransferase from Rhodococcus opacus (strain B4).